We begin with the raw amino-acid sequence, 116 residues long: Ribosome-binding factor A (116 aa).

This sequence belongs to the RbfA family. As to quaternary structure, monomer. Binds 30S ribosomal subunits, but not 50S ribosomal subunits or 70S ribosomes.

It localises to the cytoplasm. Its function is as follows. One of several proteins that assist in the late maturation steps of the functional core of the 30S ribosomal subunit. Associates with free 30S ribosomal subunits (but not with 30S subunits that are part of 70S ribosomes or polysomes). Required for efficient processing of 16S rRNA. May interact with the 5'-terminal helix region of 16S rRNA. The chain is Ribosome-binding factor A from Streptococcus agalactiae.